We begin with the raw amino-acid sequence, 312 residues long: Methionyl-tRNA formyltransferase (312 aa).

112 to 115 (SLLP) contributes to the (6S)-5,6,7,8-tetrahydrofolate binding site.

Belongs to the Fmt family.

It catalyses the reaction L-methionyl-tRNA(fMet) + (6R)-10-formyltetrahydrofolate = N-formyl-L-methionyl-tRNA(fMet) + (6S)-5,6,7,8-tetrahydrofolate + H(+). Attaches a formyl group to the free amino group of methionyl-tRNA(fMet). The formyl group appears to play a dual role in the initiator identity of N-formylmethionyl-tRNA by promoting its recognition by IF2 and preventing the misappropriation of this tRNA by the elongation apparatus. The chain is Methionyl-tRNA formyltransferase from Magnetococcus marinus (strain ATCC BAA-1437 / JCM 17883 / MC-1).